A 450-amino-acid chain; its full sequence is MYTKDTIVAIATPQGNGGIGIIRISGIDALAIAEKLTKKQLKPRYATFCNVYNDNEIIDHGIIIFFKAPLSYTGEDVVEIQAHGNPFILNLIIKAALNCGARMAKAGEFTERAFLNNKLDLAQAEAVADIINASSEIAAKSAAKSLQGDFSKEINNLLEKLIYLRMYVEASIDFPEEEINFLEDQKIHSSLEEIYKVILAVKNSCKQGVILAEGITLILVGKPNAGKSSLLNALAGKESAIVTSIAGTTRDIVKEHIQINGVPMHIIDTAGLRNSDDIIESEGIKRAIKKIQEADQVLFVTDDYTNSQVKFSDIKEIIPEFYDQIPKDIDITYVHNKIDLLKEVPHNHANHIYISAENNIGIDKLKEHILNKVGYTNQNESIYTARERHVTAINNAFEHIKLAKEQLELGNGELLAEELLIVQEYLNSITGEFSSDDLLGEIFSSFCIGK.

Residues R23, E79, and K118 each contribute to the (6S)-5-formyl-5,6,7,8-tetrahydrofolate site. The TrmE-type G domain occupies 214 to 374 (GITLILVGKP…LKEHILNKVG (161 aa)). N224 contacts K(+). Residues 224–229 (NAGKSS), 243–249 (TSIAGTT), and 268–271 (DTAG) contribute to the GTP site. S228 contributes to the Mg(2+) binding site. Positions 243, 245, and 248 each coordinate K(+). Mg(2+) is bound at residue T249. Residue K450 participates in (6S)-5-formyl-5,6,7,8-tetrahydrofolate binding.

This sequence belongs to the TRAFAC class TrmE-Era-EngA-EngB-Septin-like GTPase superfamily. TrmE GTPase family. In terms of assembly, homodimer. Heterotetramer of two MnmE and two MnmG subunits. K(+) serves as cofactor.

The protein resides in the cytoplasm. Its function is as follows. Exhibits a very high intrinsic GTPase hydrolysis rate. Involved in the addition of a carboxymethylaminomethyl (cmnm) group at the wobble position (U34) of certain tRNAs, forming tRNA-cmnm(5)s(2)U34. In Francisella tularensis subsp. tularensis (strain FSC 198), this protein is tRNA modification GTPase MnmE.